Reading from the N-terminus, the 257-residue chain is MQVIRLAALSDNYIFLLHDSHKNIAAVVDPAEAEPVLKQLAQLKAELVAIFNTHHHNDHVGGNQKLIQKFPQVKVYGGAKDQGRIPGQQVFLQPGDRVQFADRVAEVIFVPGHTRAHIAYYFPPQTDDTPGELFCGDTLFAGGCGRLFEGTPAQMVESLTKLRSLPENTRVWCAHEYTLKNLQFALSVDSKNTELQKRLDEVKTKRSQGIATVPSLLGVEKLTNPFLRWEQPSLQLAVNSNDPVQTFARIRGLKDKF.

The Zn(2+) site is built by His54, His56, Asp58, His59, His113, Asp137, and His175.

It belongs to the metallo-beta-lactamase superfamily. Glyoxalase II family. Monomer. It depends on Zn(2+) as a cofactor.

It catalyses the reaction an S-(2-hydroxyacyl)glutathione + H2O = a 2-hydroxy carboxylate + glutathione + H(+). It participates in secondary metabolite metabolism; methylglyoxal degradation; (R)-lactate from methylglyoxal: step 2/2. Its function is as follows. Thiolesterase that catalyzes the hydrolysis of S-D-lactoyl-glutathione to form glutathione and D-lactic acid. The polypeptide is Hydroxyacylglutathione hydrolase (Nostoc sp. (strain PCC 7120 / SAG 25.82 / UTEX 2576)).